A 550-amino-acid chain; its full sequence is Chaperonin GroEL (550 aa).

ATP-binding positions include 30 to 33 (TLGP), Lys51, 87 to 91 (DGTTT), Gly415, and Asp497.

The protein belongs to the chaperonin (HSP60) family. Forms a cylinder of 14 subunits composed of two heptameric rings stacked back-to-back. Interacts with the co-chaperonin GroES.

It localises to the cytoplasm. The enzyme catalyses ATP + H2O + a folded polypeptide = ADP + phosphate + an unfolded polypeptide.. In terms of biological role, together with its co-chaperonin GroES, plays an essential role in assisting protein folding. The GroEL-GroES system forms a nano-cage that allows encapsulation of the non-native substrate proteins and provides a physical environment optimized to promote and accelerate protein folding. The sequence is that of Chaperonin GroEL from Yersinia enterocolitica.